The chain runs to 126 residues: Holo-[acyl-carrier-protein] synthase (126 aa).

Positions 8 and 57 each coordinate Mg(2+).

It belongs to the P-Pant transferase superfamily. AcpS family. Mg(2+) is required as a cofactor.

The protein localises to the cytoplasm. The enzyme catalyses apo-[ACP] + CoA = holo-[ACP] + adenosine 3',5'-bisphosphate + H(+). Functionally, transfers the 4'-phosphopantetheine moiety from coenzyme A to a Ser of acyl-carrier-protein. This Trichlorobacter lovleyi (strain ATCC BAA-1151 / DSM 17278 / SZ) (Geobacter lovleyi) protein is Holo-[acyl-carrier-protein] synthase.